The following is a 267-amino-acid chain: Hydroxynaphthalene reductase-like protein Arp2 (267 aa).

The NADP(+) site is built by I25, N45, D71, and N98. Active-site proton donor residues include S147 and S148. The NADP(+) site is built by Y162, K166, V195, and T197. Y162 acts as the Proton acceptor in catalysis. The Lowers pKa of active site Tyr role is filled by K166.

The protein belongs to the short-chain dehydrogenases/reductases (SDR) family.

Functionally, hydroxynaphthalene reductase-like protein; part of the Pks2 gene cluster that mediates the formation of infectious structures (appressoria), enabling these fungi to kill insects faster. The product of the Pks2 gene cluster is different from the one of Pks1 and has still not been identified. This chain is Hydroxynaphthalene reductase-like protein Arp2, found in Metarhizium robertsii (strain ARSEF 23 / ATCC MYA-3075) (Metarhizium anisopliae (strain ARSEF 23)).